An 86-amino-acid polypeptide reads, in one-letter code: MGRKDSSNTKLPVDQYRKQIGKQDYKKTKPILRATKLKAEAKKTAIGIKEVGLMLAAILALLLAFYAFFYLRLSTNIDSDLDLDED.

The helical transmembrane segment at 51–71 (VGLMLAAILALLLAFYAFFYL) threads the bilayer.

It belongs to the TRIQK family. As to expression, expressed in heart, brain, spleen, lung, liver, skeletal muscle, kidney and testis.

It localises to the endoplasmic reticulum membrane. Functionally, may play a role in cell growth and maintenance of cell morphology. The polypeptide is Triple QxxK/R motif-containing protein (Triqk) (Mus musculus (Mouse)).